The following is a 126-amino-acid chain: 14 kDa phosphohistidine phosphatase (126 aa).

A substrate-binding site is contributed by Lys22. Catalysis depends on His54, which acts as the Proton acceptor. Ser95–Gly97 is a substrate binding site.

The protein belongs to the janus family. In terms of assembly, monomer.

It localises to the cytoplasm. The catalysed reaction is N(pros)-phospho-L-histidyl-[protein] + H2O = L-histidyl-[protein] + phosphate. The enzyme catalyses N(tele)-phospho-L-histidyl-[protein] + H2O = L-histidyl-[protein] + phosphate. Its function is as follows. Exhibits phosphohistidine phosphatase activity. This is 14 kDa phosphohistidine phosphatase (PHPT1) from Sus scrofa (Pig).